The sequence spans 331 residues: PHD finger protein 11 (331 aa).

The C2HC pre-PHD-type zinc finger occupies 42–78 (KRTCALCPKDVEYNVLYFAQSENIAAHENCLLYSSGL). The PHD-type zinc-finger motif lies at 108-160 (LKCKFCHKRGATVGCDLKNCNKNYHFFCAKKDDAVPQSDGVRGIYKLLCQQHA).

Interacts with BRCA1 and RELA. As to expression, highly expressed in T and B-cells, as well as natural killer and mature dendritic cells. Expressed at higher levels in Th1 as compared to Th2 cells. Expressed at low levels in all normal tissues tested, including lung, testis, small intestine, breast, liver and placenta.

The protein resides in the nucleus. Functionally, positive regulator of Th1-type cytokine gene expression. The polypeptide is PHD finger protein 11 (PHF11) (Homo sapiens (Human)).